The chain runs to 456 residues: GTPase Der (456 aa).

EngA-type G domains follow at residues 4–169 and 177–352; these read PIVA…PAVE and IKVA…ESHK. Residues 10-17, 57-61, 120-123, 183-190, 230-234, and 295-298 each bind GTP; these read GRPNVGKS, DTGGL, NKCE, DTAGI, and NKWD. Residues 353–438 form the KH-like domain; the sequence is RRVSTSVINE…PIILLWRSKK (86 aa).

Belongs to the TRAFAC class TrmE-Era-EngA-EngB-Septin-like GTPase superfamily. EngA (Der) GTPase family. In terms of assembly, associates with the 50S ribosomal subunit.

Functionally, GTPase that plays an essential role in the late steps of ribosome biogenesis. This chain is GTPase Der, found in Nostoc punctiforme (strain ATCC 29133 / PCC 73102).